The primary structure comprises 549 residues: Glucose-6-phosphate isomerase (549 aa).

The active-site Proton donor is the E355. Active-site residues include H386 and K514.

This sequence belongs to the GPI family.

Its subcellular location is the cytoplasm. The enzyme catalyses alpha-D-glucose 6-phosphate = beta-D-fructose 6-phosphate. Its pathway is carbohydrate biosynthesis; gluconeogenesis. It participates in carbohydrate degradation; glycolysis; D-glyceraldehyde 3-phosphate and glycerone phosphate from D-glucose: step 2/4. Functionally, catalyzes the reversible isomerization of glucose-6-phosphate to fructose-6-phosphate. This chain is Glucose-6-phosphate isomerase, found in Salmonella schwarzengrund (strain CVM19633).